The primary structure comprises 339 residues: Basic membrane protein A (339 aa).

A signal peptide spans 1–17 (MNKILLLILLESIVFLS). Cys18 carries N-palmitoyl cysteine lipidation. A lipid anchor (S-diacylglycerol cysteine) is attached at Cys18.

Belongs to the BMP lipoprotein family. Monomer.

Its subcellular location is the cell inner membrane. Functionally, immunogenic protein. May be part of an ABC-type nucleoside uptake system involved in the purine salvage pathway. The chain is Basic membrane protein A (bmpA) from Borreliella burgdorferi (strain ATCC 35210 / DSM 4680 / CIP 102532 / B31) (Borrelia burgdorferi).